The chain runs to 354 residues: Eukaryotic translation initiation factor 3 subunit H (354 aa).

Residues 1–28 (MATRQPYQKKFQSRDQREQTSSQQAPNS) form a disordered region. The segment covering 19–28 (QTSSQQAPNS) has biased composition (polar residues). The region spanning 33 to 174 (VTVDALVVMK…LSAFRLSNKA (142 aa)) is the MPN domain.

It belongs to the eIF-3 subunit H family. Component of the eukaryotic translation initiation factor 3 (eIF-3) complex.

The protein localises to the cytoplasm. Its function is as follows. Component of the eukaryotic translation initiation factor 3 (eIF-3) complex, which is involved in protein synthesis of a specialized repertoire of mRNAs and, together with other initiation factors, stimulates binding of mRNA and methionyl-tRNAi to the 40S ribosome. The eIF-3 complex specifically targets and initiates translation of a subset of mRNAs involved in cell proliferation. The polypeptide is Eukaryotic translation initiation factor 3 subunit H (Monosiga brevicollis (Choanoflagellate)).